The primary structure comprises 160 residues: MKLQVLPLSQEAFSAYGDVIETQQRDFFHINNGLVERYHDLALVEILEQDRTLISINRAQPANLPLTIYELERHPLGTQAFIPMKGEVFVVVVALGDDKPDLSTLRAFITNGEQGVNYHRNVWHHPLFAWQRVTDFLTIDRGGSDNCDVESIPEQELCFA.

It belongs to the ureidoglycolate lyase family. Homodimer. Requires Ni(2+) as cofactor.

The catalysed reaction is (S)-ureidoglycolate = urea + glyoxylate. The protein operates within nitrogen metabolism; (S)-allantoin degradation. Catalyzes the catabolism of the allantoin degradation intermediate (S)-ureidoglycolate, generating urea and glyoxylate. Involved in the anaerobic utilization of allantoin as sole nitrogen source. Reinforces the induction of genes involved in the degradation of allantoin and glyoxylate by producing glyoxylate. In Escherichia coli O139:H28 (strain E24377A / ETEC), this protein is Ureidoglycolate lyase.